The chain runs to 316 residues: Ribosomal protein L11 methyltransferase (316 aa).

4 residues coordinate S-adenosyl-L-methionine: threonine 160, glycine 181, aspartate 203, and asparagine 246.

It belongs to the methyltransferase superfamily. PrmA family.

It localises to the cytoplasm. The enzyme catalyses L-lysyl-[protein] + 3 S-adenosyl-L-methionine = N(6),N(6),N(6)-trimethyl-L-lysyl-[protein] + 3 S-adenosyl-L-homocysteine + 3 H(+). Functionally, methylates ribosomal protein L11. This chain is Ribosomal protein L11 methyltransferase, found in Heliobacterium modesticaldum (strain ATCC 51547 / Ice1).